The primary structure comprises 647 residues: CRE-binding bZIP protein SKO1 (647 aa).

4 disordered regions span residues 1 to 119, 135 to 204, 305 to 331, and 353 to 429; these read MSSE…GSKR, STTN…QMPG, TPTT…TSTK, and KENE…EEQE. Over residues 51–85 the composition is skewed to polar residues; it reads RNNSTSTITQHSQRSTHSLNSIPEENGNSTVTDNS. Serine 94 carries the phosphoserine modification. Threonine 113 carries the phosphothreonine modification. Low complexity-rich tracts occupy residues 138–194 and 305–329; these read NPSQ…SGNG and TPTT…PNTS. Composition is skewed to polar residues over residues 357-368 and 396-405; these read NLTTQIENNDQF and RKNSAVTTAP. Serine 399 carries the post-translational modification Phosphoserine. A bZIP domain is found at 429–492; sequence ERKRKEFLER…PSSSSNSQFN (64 aa). The segment at 430-451 is basic motif; the sequence is RKRKEFLERNRVAASKFRKRKK. Positions 454–461 are leucine-zipper; sequence IKKIENDL. Serine 558 carries the post-translational modification Phosphoserine.

It belongs to the bZIP family.

The protein resides in the nucleus. Its function is as follows. Binds to the CRE motif 5'-TGACGTCA-3' and acts as a repressor of transcription of the SUC2 gene and most probably other genes. This is CRE-binding bZIP protein SKO1 (SKO1) from Saccharomyces cerevisiae (strain ATCC 204508 / S288c) (Baker's yeast).